The chain runs to 191 residues: Adenine phosphoribosyltransferase (191 aa).

The protein belongs to the purine/pyrimidine phosphoribosyltransferase family. In terms of assembly, homodimer.

Its subcellular location is the cytoplasm. It carries out the reaction AMP + diphosphate = 5-phospho-alpha-D-ribose 1-diphosphate + adenine. The protein operates within purine metabolism; AMP biosynthesis via salvage pathway; AMP from adenine: step 1/1. In terms of biological role, catalyzes a salvage reaction resulting in the formation of AMP, that is energically less costly than de novo synthesis. The chain is Adenine phosphoribosyltransferase from Nocardia farcinica (strain IFM 10152).